The sequence spans 98 residues: NADH-ubiquinone oxidoreductase chain 4L (98 aa).

3 helical membrane passes run 1–21, 29–49, and 59–79; these read MSLI…GLLM, ALLC…LTAL, and MPII…ALLV.

Belongs to the complex I subunit 4L family. Core subunit of respiratory chain NADH dehydrogenase (Complex I) which is composed of 45 different subunits.

It is found in the mitochondrion inner membrane. The catalysed reaction is a ubiquinone + NADH + 5 H(+)(in) = a ubiquinol + NAD(+) + 4 H(+)(out). Core subunit of the mitochondrial membrane respiratory chain NADH dehydrogenase (Complex I) which catalyzes electron transfer from NADH through the respiratory chain, using ubiquinone as an electron acceptor. Part of the enzyme membrane arm which is embedded in the lipid bilayer and involved in proton translocation. This Hyperoodon ampullatus (Northern bottlenose whale) protein is NADH-ubiquinone oxidoreductase chain 4L (MT-ND4L).